The following is a 443-amino-acid chain: Na(+)-translocating NADH-quinone reductase subunit A (443 aa).

This sequence belongs to the NqrA family. In terms of assembly, composed of six subunits; NqrA, NqrB, NqrC, NqrD, NqrE and NqrF.

The enzyme catalyses a ubiquinone + n Na(+)(in) + NADH + H(+) = a ubiquinol + n Na(+)(out) + NAD(+). Functionally, NQR complex catalyzes the reduction of ubiquinone-1 to ubiquinol by two successive reactions, coupled with the transport of Na(+) ions from the cytoplasm to the periplasm. NqrA to NqrE are probably involved in the second step, the conversion of ubisemiquinone to ubiquinol. This Actinobacillus succinogenes (strain ATCC 55618 / DSM 22257 / CCUG 43843 / 130Z) protein is Na(+)-translocating NADH-quinone reductase subunit A.